A 299-amino-acid chain; its full sequence is uncharacterized protein (299 aa).

6 helical membrane-spanning segments follow: residues 32-52 (FILLLIIIAAIPLLISYYLHL), 56-76 (SMIIFVVIYVGAALFIPSILY), 199-219 (LAIGFIILCGVIPAVAALLGA), 220-240 (YLIAVSGMLSGVAPIPPVKPE), 246-266 (FEIVQMGTAIIGALFAIPIFG), and 273-293 (FLISAVTMTIGVLAYYTILKF).

The protein localises to the cell membrane. This is an uncharacterized protein from Methanocaldococcus jannaschii (strain ATCC 43067 / DSM 2661 / JAL-1 / JCM 10045 / NBRC 100440) (Methanococcus jannaschii).